The chain runs to 513 residues: ATP synthase subunit alpha 2 (513 aa).

169 to 176 (GDRQVGKT) is an ATP binding site.

Belongs to the ATPase alpha/beta chains family. As to quaternary structure, F-type ATPases have 2 components, CF(1) - the catalytic core - and CF(0) - the membrane proton channel. CF(1) has five subunits: alpha(3), beta(3), gamma(1), delta(1), epsilon(1). CF(0) has three main subunits: a(1), b(2) and c(9-12). The alpha and beta chains form an alternating ring which encloses part of the gamma chain. CF(1) is attached to CF(0) by a central stalk formed by the gamma and epsilon chains, while a peripheral stalk is formed by the delta and b chains.

The protein localises to the cell inner membrane. It catalyses the reaction ATP + H2O + 4 H(+)(in) = ADP + phosphate + 5 H(+)(out). Its function is as follows. Produces ATP from ADP in the presence of a proton gradient across the membrane. The alpha chain is a regulatory subunit. The protein is ATP synthase subunit alpha 2 of Psychromonas ingrahamii (strain DSM 17664 / CCUG 51855 / 37).